The sequence spans 925 residues: MVTSLVRKIFGSRNERIVKRLGKTVARINELEAELQSLDDEALKARTGQLRERLAGGESLEALLPEAFAVTREAGRRVMGMRHFDVQLIGGMVLDSGRIAEMRTGEGKTLVATLAAYLNALSGKGVHVVTVNDYLARRDAAWMGRLYHALGLSVGVINSSGGAGPDSASYLYDPGFHAEGGIAHLRPVTRREAYAADITYGTNNEFGFDYLRDNMAFRLEDRVQRELNFAIVDEVDSILIDEARTPLIISGPAGESAEMYERMNRIVPKLTPQEEEEGPGDYSVDEKMKQVFLTEDGQEKAEQLMRDAGLLAEGQGLYDAGSIALLHHLNAALRAHILFHKDVDYLVRDGQILIIDEFTGRIMAGRRWSEGLHQAIEAKEGVPIQRENQTLASITFQNYFRLYEKLSGMTGTADTEAYEFQQIYGLEVVVIPTNRPMVRNDMQDLVYMTQKEKFEAIIKEIKYCQEKRQPVLVGTASVETSEYLSGLLKKAKIAHEVLNAKQHEREAHVVEQAGRPGAVTLATNMAGRGTDIVLGGSLEAELATLGDNPKPADVDRVKADWQKRHDEVLANGGLHIIGSERHESRRIDNQLRGRAGRQGDPGSSRFFLSLEDNLMRIFASDRVKSLMQRLGMQEGEAIENAWVTKAIENAQRKVEAHNFDIRKNLLEYDDVANDQRKVVYEQRRELLETEDISETLEAVRRDVLEGVISQYIPQGSIEEQWDVPGLTHVLEQDFGLVLDIAGWLEREDDLHEETLRERIHQHAAEAYQVKEDKVGAETMRRIEKDVMLQVLDSHWKEHLAAMDYLRQGIGLRGYAQRNPKQEYKREAFEMFEALLTRIKHDVTALLMRVQVRSPEDAEALERQQRAAAGADMRFQHSQPESVLHKPEAGEGEEAQPFRRETPKVGRNDPCWCGSGKKFKHCHGKL.

ATP contacts are provided by residues glutamine 87, 105–109, and aspartate 531; that span reads GEGKT. The disordered stretch occupies residues 867–909; sequence AAGADMRFQHSQPESVLHKPEAGEGEEAQPFRRETPKVGRNDP. Over residues 895–906 the composition is skewed to basic and acidic residues; sequence QPFRRETPKVGR. Positions 910, 912, 921, and 922 each coordinate Zn(2+).

The protein belongs to the SecA family. In terms of assembly, monomer and homodimer. Part of the essential Sec protein translocation apparatus which comprises SecA, SecYEG and auxiliary proteins SecDF-YajC and YidC. Zn(2+) is required as a cofactor.

The protein localises to the cell inner membrane. It localises to the cytoplasm. The catalysed reaction is ATP + H2O + cellular proteinSide 1 = ADP + phosphate + cellular proteinSide 2.. Its function is as follows. Part of the Sec protein translocase complex. Interacts with the SecYEG preprotein conducting channel. Has a central role in coupling the hydrolysis of ATP to the transfer of proteins into and across the cell membrane, serving both as a receptor for the preprotein-SecB complex and as an ATP-driven molecular motor driving the stepwise translocation of polypeptide chains across the membrane. The chain is Protein translocase subunit SecA from Thioalkalivibrio sulfidiphilus (strain HL-EbGR7).